Here is a 259-residue protein sequence, read N- to C-terminus: Chloroplastic group IIB intron splicing facilitator CRS2, chloroplastic (259 aa).

The segment at 1-21 is disordered; the sequence is MSLAVATPASARLSPLTTSSP. The N-terminal 49 residues, 1–49, are a transit peptide targeting the chloroplast; sequence MSLAVATPASARLSPLTTSSPEPCRRRRLLLSAAAPLRRTRLRRRIAVV. A tRNA-binding site is contributed by Y77. The active-site Proton acceptor is H82. TRNA is bound by residues Y127, N129, and N175.

It belongs to the PTH family. CRS2 subfamily. In terms of assembly, part of large ribonucleo-protein complexes that include group IIB introns and either CAF1 or CAF2.

It is found in the plastid. The protein localises to the chloroplast stroma. Required for the splicing of group IIB introns in chloroplasts. The sequence is that of Chloroplastic group IIB intron splicing facilitator CRS2, chloroplastic from Oryza sativa subsp. japonica (Rice).